We begin with the raw amino-acid sequence, 266 residues long: MRMLPLKDKAQVGLWSARYIADRINQFAPTAERPFVLGLPTGGTPLTTYEQLIKLYQQGEVSFANVVTFNMDEYVGLSADHPQSYHRFMFDNFFNHIDIPRENINILDGTASDLLAECAAYEAKITTLGGIKLFFGGVGSDGHIAFNEPASSLRSRTRIKTLTQETLIDNARFFNNDINQVPKLALTVGVGTLMDAEEILILATGHNKALAVQAAIEGSVNHLWTVSALQLHPRGLIVCDEAATMELKVKTLRYFQQLEAPELAKY.

Asp72 functions as the Proton acceptor; for enolization step in the catalytic mechanism. Asp141 acts as the For ring-opening step in catalysis. The active-site Proton acceptor; for ring-opening step is the His143. Glu148 serves as the catalytic For ring-opening step.

The protein belongs to the glucosamine/galactosamine-6-phosphate isomerase family. NagB subfamily. As to quaternary structure, homohexamer.

It catalyses the reaction alpha-D-glucosamine 6-phosphate + H2O = beta-D-fructose 6-phosphate + NH4(+). It participates in amino-sugar metabolism; N-acetylneuraminate degradation; D-fructose 6-phosphate from N-acetylneuraminate: step 5/5. With respect to regulation, allosterically activated by N-acetylglucosamine 6-phosphate (GlcNAc6P). Its function is as follows. Catalyzes the reversible isomerization-deamination of glucosamine 6-phosphate (GlcN6P) to form fructose 6-phosphate (Fru6P) and ammonium ion. This Tolumonas auensis (strain DSM 9187 / NBRC 110442 / TA 4) protein is Glucosamine-6-phosphate deaminase.